The primary structure comprises 474 residues: Ribulose bisphosphate carboxylase large chain (474 aa).

Substrate-binding residues include Asn122 and Thr172. Residue Lys174 is the Proton acceptor of the active site. Residue Lys176 coordinates substrate. Positions 200, 202, and 203 each coordinate Mg(2+). The residue at position 200 (Lys200) is an N6-carboxylysine. Residue His293 is the Proton acceptor of the active site. Arg294, His326, and Ser378 together coordinate substrate.

This sequence belongs to the RuBisCO large chain family. Type I subfamily. Heterohexadecamer of 8 large chains and 8 small chains; disulfide-linked. The disulfide link is formed within the large subunit homodimers. The cofactor is Mg(2+). Post-translationally, the disulfide bond which can form in the large chain dimeric partners within the hexadecamer appears to be associated with oxidative stress and protein turnover.

Its subcellular location is the carboxysome. The enzyme catalyses 2 (2R)-3-phosphoglycerate + 2 H(+) = D-ribulose 1,5-bisphosphate + CO2 + H2O. It carries out the reaction D-ribulose 1,5-bisphosphate + O2 = 2-phosphoglycolate + (2R)-3-phosphoglycerate + 2 H(+). Its function is as follows. RuBisCO catalyzes two reactions: the carboxylation of D-ribulose 1,5-bisphosphate, the primary event in carbon dioxide fixation, as well as the oxidative fragmentation of the pentose substrate in the photorespiration process. Both reactions occur simultaneously and in competition at the same active site. The chain is Ribulose bisphosphate carboxylase large chain from Synechococcus sp. (strain JA-2-3B'a(2-13)) (Cyanobacteria bacterium Yellowstone B-Prime).